The sequence spans 520 residues: 2-isopropylmalate synthase (520 aa).

Residues 12–274 (IRIFDTTLRD…DSAINTPRIV (263 aa)) enclose the Pyruvate carboxyltransferase domain. Residues Asp-21, His-209, His-211, and Asn-245 each coordinate Mn(2+). Positions 396–520 (RLASMTISDV…VVAGKTAAVA (125 aa)) are regulatory domain.

Belongs to the alpha-IPM synthase/homocitrate synthase family. LeuA type 1 subfamily. Homodimer. Mn(2+) is required as a cofactor.

The protein resides in the cytoplasm. It carries out the reaction 3-methyl-2-oxobutanoate + acetyl-CoA + H2O = (2S)-2-isopropylmalate + CoA + H(+). The protein operates within amino-acid biosynthesis; L-leucine biosynthesis; L-leucine from 3-methyl-2-oxobutanoate: step 1/4. Its function is as follows. Catalyzes the condensation of the acetyl group of acetyl-CoA with 3-methyl-2-oxobutanoate (2-ketoisovalerate) to form 3-carboxy-3-hydroxy-4-methylpentanoate (2-isopropylmalate). The sequence is that of 2-isopropylmalate synthase from Xanthomonas euvesicatoria pv. vesicatoria (strain 85-10) (Xanthomonas campestris pv. vesicatoria).